Here is a 75-residue protein sequence, read N- to C-terminus: Small ribosomal subunit protein bS18 (75 aa).

The protein belongs to the bacterial ribosomal protein bS18 family. As to quaternary structure, part of the 30S ribosomal subunit. Forms a tight heterodimer with protein bS6.

Binds as a heterodimer with protein bS6 to the central domain of the 16S rRNA, where it helps stabilize the platform of the 30S subunit. This Thermotoga maritima (strain ATCC 43589 / DSM 3109 / JCM 10099 / NBRC 100826 / MSB8) protein is Small ribosomal subunit protein bS18.